The chain runs to 793 residues: Phosphoribosylformylglycinamidine synthase subunit PurL (793 aa).

His53 is an active-site residue. Positions 56 and 95 each coordinate ATP. Glu97 is a Mg(2+) binding site. Residues 98–101 (SHNH) and Arg120 each bind substrate. The active-site Proton acceptor is His99. A Mg(2+)-binding site is contributed by Asp121. Gln244 contributes to the substrate binding site. Asp272 is a Mg(2+) binding site. Residue 316–318 (ESQ) participates in substrate binding. Residues Asp523 and Gly560 each coordinate ATP. Mg(2+) is bound at residue Asn561. Substrate is bound at residue Ser563.

Belongs to the FGAMS family. Monomer. Part of the FGAM synthase complex composed of 1 PurL, 1 PurQ and 2 PurS subunits.

The protein resides in the cytoplasm. It catalyses the reaction N(2)-formyl-N(1)-(5-phospho-beta-D-ribosyl)glycinamide + L-glutamine + ATP + H2O = 2-formamido-N(1)-(5-O-phospho-beta-D-ribosyl)acetamidine + L-glutamate + ADP + phosphate + H(+). It participates in purine metabolism; IMP biosynthesis via de novo pathway; 5-amino-1-(5-phospho-D-ribosyl)imidazole from N(2)-formyl-N(1)-(5-phospho-D-ribosyl)glycinamide: step 1/2. Its function is as follows. Part of the phosphoribosylformylglycinamidine synthase complex involved in the purines biosynthetic pathway. Catalyzes the ATP-dependent conversion of formylglycinamide ribonucleotide (FGAR) and glutamine to yield formylglycinamidine ribonucleotide (FGAM) and glutamate. The FGAM synthase complex is composed of three subunits. PurQ produces an ammonia molecule by converting glutamine to glutamate. PurL transfers the ammonia molecule to FGAR to form FGAM in an ATP-dependent manner. PurS interacts with PurQ and PurL and is thought to assist in the transfer of the ammonia molecule from PurQ to PurL. This chain is Phosphoribosylformylglycinamidine synthase subunit PurL, found in Prochlorococcus marinus (strain SARG / CCMP1375 / SS120).